The chain runs to 407 residues: Nuclear hormone receptor family member nhr-134 (407 aa).

The NR C4-type zinc finger occupies 11-31 (CEICGQKTSGRHFGVMSCRSC). The NR C4-type; degenerate zinc finger occupies 47–66 (RCPNGNCKLLENGKFKCKKC). The 251-residue stretch at 157 to 407 (QFHNSLERLA…FSEPDMFEST (251 aa)) folds into the NR LBD domain.

Belongs to the nuclear hormone receptor family.

It localises to the nucleus. Its function is as follows. Orphan nuclear receptor. This chain is Nuclear hormone receptor family member nhr-134 (nhr-134), found in Caenorhabditis elegans.